The sequence spans 296 residues: LysM and putative peptidoglycan-binding domain-containing protein 4 (296 aa).

The Extracellular portion of the chain corresponds to 1–217 (MRHEELLTKT…PMDGADCGIQ (217 aa)). The tract at residues 29–67 (KNGSGDSGDSSEEESHRVVLRPRGKERHKSGVHQPPQAG) is disordered. N30 is a glycosylation site (N-linked (GlcNAc...) asparagine). Residues 46–59 (VVLRPRGKERHKSG) show a composition bias toward basic residues. The LysM domain occupies 74–118 (LQRELAQEDSLNKLALQYGCKVADIKKVNNFIREQDLYALKSVKI). A helical transmembrane segment spans residues 218–238 (WWNAVFIMLLIGIVLPVFYLV). The Cytoplasmic segment spans residues 239–296 (YFKIQASGETPNSLNTTVIPNGSMAMGTVPGQAPRLAVAVPAVTSADSQFSQTTQAGS).

It localises to the membrane. The sequence is that of LysM and putative peptidoglycan-binding domain-containing protein 4 (LYSMD4) from Homo sapiens (Human).